We begin with the raw amino-acid sequence, 327 residues long: GTPase Obg (327 aa).

The Obg domain maps to methionine 1 to leucine 159. Residues alanine 160–isoleucine 327 form the OBG-type G domain. ATP-binding positions include glycine 166–serine 173, phenylalanine 191–isoleucine 195, aspartate 213–glycine 216, asparagine 280–glutamate 283, and serine 309–serine 311. Residues serine 173 and threonine 193 each coordinate Mg(2+).

This sequence belongs to the TRAFAC class OBG-HflX-like GTPase superfamily. OBG GTPase family. In terms of assembly, monomer. Mg(2+) serves as cofactor.

The protein localises to the cytoplasm. In terms of biological role, an essential GTPase which binds GTP, GDP and possibly (p)ppGpp with moderate affinity, with high nucleotide exchange rates and a fairly low GTP hydrolysis rate. Plays a role in control of the cell cycle, stress response, ribosome biogenesis and in those bacteria that undergo differentiation, in morphogenesis control. The sequence is that of GTPase Obg from Prochlorococcus marinus (strain MIT 9312).